Reading from the N-terminus, the 143-residue chain is Large ribosomal subunit protein uL11 (143 aa).

This sequence belongs to the universal ribosomal protein uL11 family. As to quaternary structure, part of the ribosomal stalk of the 50S ribosomal subunit. Interacts with L10 and the large rRNA to form the base of the stalk. L10 forms an elongated spine to which L12 dimers bind in a sequential fashion forming a multimeric L10(L12)X complex. In terms of processing, one or more lysine residues are methylated.

Functionally, forms part of the ribosomal stalk which helps the ribosome interact with GTP-bound translation factors. The chain is Large ribosomal subunit protein uL11 from Borreliella afzelii (strain PKo) (Borrelia afzelii).